Here is a 306-residue protein sequence, read N- to C-terminus: MSAAPAPAPAAAAPRALPSRLSQFYALTKPRVVQLIVFCAFIGMVLAVPGMPSGAQWALMAVASAGIWLVAGAAAAFNCIVEQGIDAKMKRTAWRPTAKGELSNTQTLLFSALLCAAGSALLYWWVNPLTMWLTFATFVGYAVIYTVILKPLTPQNIVIGGASGAMPPVLGWAAMTGEVGPEALILFLIIFLWTPPHFWALALYRVEDYRKSGLPMLPVTHGNEFTRLQVFLYTLILFAGCLMPFVYGMSSWIYLAAAVVLSAGFCLYGFRLWRDYSDTLARKTFRFSLIHLSLLFAALLVDHYLL.

9 helical membrane passes run 32-52 (VVQLIVFCAFIGMVLAVPGMP), 57-77 (WALMAVASAGIWLVAGAAAAF), 108-128 (LLFSALLCAAGSALLYWWVNP), 129-149 (LTMWLTFATFVGYAVIYTVIL), 157-177 (IVIGGASGAMPPVLGWAAMTG), 183-203 (ALILFLIIFLWTPPHFWALAL), 230-250 (VFLYTLILFAGCLMPFVYGMS), 252-272 (WIYLAAAVVLSAGFCLYGFRL), and 285-305 (FRFSLIHLSLLFAALLVDHYL).

Belongs to the UbiA prenyltransferase family. Protoheme IX farnesyltransferase subfamily.

The protein resides in the cell inner membrane. The catalysed reaction is heme b + (2E,6E)-farnesyl diphosphate + H2O = Fe(II)-heme o + diphosphate. It participates in porphyrin-containing compound metabolism; heme O biosynthesis; heme O from protoheme: step 1/1. Converts heme B (protoheme IX) to heme O by substitution of the vinyl group on carbon 2 of heme B porphyrin ring with a hydroxyethyl farnesyl side group. The protein is Protoheme IX farnesyltransferase of Acidovorax ebreus (strain TPSY) (Diaphorobacter sp. (strain TPSY)).